The sequence spans 162 residues: UPF0178 protein RSKD131_2223 (162 aa).

This sequence belongs to the UPF0178 family.

This Cereibacter sphaeroides (strain KD131 / KCTC 12085) (Rhodobacter sphaeroides) protein is UPF0178 protein RSKD131_2223.